The primary structure comprises 757 residues: Catalase-peroxidase (757 aa).

Residues 1–28 (MENQSNDISKCPFHNGSMDNQAASGTKN) form a disordered region. Over residues 17 to 28 (SMDNQAASGTKN) the composition is skewed to polar residues. Residues 100–247 (WHSAGTYRVH…LAAVQMGLIY (148 aa)) constitute a cross-link (tryptophyl-tyrosyl-methioninium (Trp-Tyr) (with M-273)). H101 functions as the Proton acceptor in the catalytic mechanism. The segment at residues 247–273 (YVNPEGPDGNPDPILAAKDIRDTFGRM) is a cross-link (tryptophyl-tyrosyl-methioninium (Tyr-Met) (with W-100)). Residue H288 coordinates heme b.

This sequence belongs to the peroxidase family. Peroxidase/catalase subfamily. Homodimer or homotetramer. It depends on heme b as a cofactor. In terms of processing, formation of the three residue Trp-Tyr-Met cross-link is important for the catalase, but not the peroxidase activity of the enzyme.

It carries out the reaction H2O2 + AH2 = A + 2 H2O. The enzyme catalyses 2 H2O2 = O2 + 2 H2O. Bifunctional enzyme with both catalase and broad-spectrum peroxidase activity. In Flavobacterium johnsoniae (strain ATCC 17061 / DSM 2064 / JCM 8514 / BCRC 14874 / CCUG 350202 / NBRC 14942 / NCIMB 11054 / UW101) (Cytophaga johnsonae), this protein is Catalase-peroxidase.